The primary structure comprises 1341 residues: uncharacterized protein (1341 aa).

Positions 41–68 (CLLCRRRKQRCDHKLPSCTACLKAGIKC) form a DNA-binding region, zn(2)-C6 fungal-type. Composition is skewed to low complexity over residues 72 to 93 (SKYS…AGTV), 779 to 791 (SNSA…SNSN), 864 to 906 (SNSS…NDNN), 920 to 967 (NHNN…GNNS), and 1036 to 1050 (SPSK…SSHS). Disordered stretches follow at residues 72–100 (SKYS…PHPV), 770–804 (ISSG…MPPA), 864–971 (SNSS…QYVR), and 1031–1116 (TMTN…NSNP). Positions 1057 to 1076 (MTQSPTPYPQTSNMLPQQHV) are enriched in polar residues. Residues 1078–1090 (RPLPQQQREQPQQ) show a composition bias toward low complexity. Residues 1091–1116 (HITSPQRFSESNFTNQLNNGMINSNP) show a composition bias toward polar residues. Ser1143 is modified (phosphoserine). Residues 1220-1230 (SQEPSSLSMDK) show a composition bias toward polar residues. Positions 1220-1240 (SQEPSSLSMDKQQQQHQQQNM) are disordered.

Its subcellular location is the nucleus. This is an uncharacterized protein from Saccharomyces cerevisiae (strain ATCC 204508 / S288c) (Baker's yeast).